The sequence spans 311 residues: tRNA-cytidine(32) 2-sulfurtransferase (311 aa).

Positions 47 to 52 match the PP-loop motif motif; sequence SGGKDS. [4Fe-4S] cluster contacts are provided by Cys-122, Cys-125, and Cys-213.

Belongs to the TtcA family. In terms of assembly, homodimer. Mg(2+) is required as a cofactor. Requires [4Fe-4S] cluster as cofactor.

Its subcellular location is the cytoplasm. The catalysed reaction is cytidine(32) in tRNA + S-sulfanyl-L-cysteinyl-[cysteine desulfurase] + AH2 + ATP = 2-thiocytidine(32) in tRNA + L-cysteinyl-[cysteine desulfurase] + A + AMP + diphosphate + H(+). It functions in the pathway tRNA modification. Catalyzes the ATP-dependent 2-thiolation of cytidine in position 32 of tRNA, to form 2-thiocytidine (s(2)C32). The sulfur atoms are provided by the cysteine/cysteine desulfurase (IscS) system. This Shigella dysenteriae serotype 1 (strain Sd197) protein is tRNA-cytidine(32) 2-sulfurtransferase.